Reading from the N-terminus, the 593-residue chain is Arginine--tRNA ligase (593 aa).

Positions 123 to 133 (PNVAKPMHVGH) match the 'HIGH' region motif.

The protein belongs to the class-I aminoacyl-tRNA synthetase family. Monomer.

It localises to the cytoplasm. It carries out the reaction tRNA(Arg) + L-arginine + ATP = L-arginyl-tRNA(Arg) + AMP + diphosphate. This is Arginine--tRNA ligase from Phenylobacterium zucineum (strain HLK1).